Here is a 110-residue protein sequence, read N- to C-terminus: Envelope glycoprotein N (110 aa).

The signal sequence occupies residues 1-17 (MTASTVALALFVASILG). At 18–80 (HCWVTANSTG…SLSSFSSVWA (63 aa)) the chain is on the virion surface side. Over residues 28–41 (VASSTERSSPSTAG) the composition is skewed to polar residues. The tract at residues 28 to 51 (VASSTERSSPSTAGLSARPSPGPT) is disordered. A helical transmembrane segment spans residues 81 to 101 (LINALLVVVATFFYLVYLCFF). The Intravirion portion of the chain corresponds to 102-110 (KFVDEVVHA).

The protein belongs to the herpesviridae glycoprotein N family. In terms of assembly, interacts (via N-terminus) with gM (via N-terminus). The gM-gN heterodimer forms the gCII complex. Post-translationally, O-glycosylated. Contains alpha 2,6-sialic acid residues. N-glycosylated.

Its subcellular location is the virion membrane. It localises to the host membrane. It is found in the host Golgi apparatus. The protein localises to the host trans-Golgi network. In terms of biological role, envelope glycoprotein necessary for proper maturation of gM and modulation of its membrane fusion activity. Also plays a critical role in virion morphogenesis. The protein is Envelope glycoprotein N of Homo sapiens (Human).